The chain runs to 299 residues: GTP cyclohydrolase FolE2 (299 aa).

The disordered stretch occupies residues 1-25; that stretch reads MKTKQWPSKTERHKRFGSVPPVAGK.

This sequence belongs to the GTP cyclohydrolase IV family.

The catalysed reaction is GTP + H2O = 7,8-dihydroneopterin 3'-triphosphate + formate + H(+). Its pathway is cofactor biosynthesis; 7,8-dihydroneopterin triphosphate biosynthesis; 7,8-dihydroneopterin triphosphate from GTP: step 1/1. Its function is as follows. Converts GTP to 7,8-dihydroneopterin triphosphate. In Halalkalibacterium halodurans (strain ATCC BAA-125 / DSM 18197 / FERM 7344 / JCM 9153 / C-125) (Bacillus halodurans), this protein is GTP cyclohydrolase FolE2.